A 473-amino-acid polypeptide reads, in one-letter code: Ribulose bisphosphate carboxylase large chain (473 aa).

Substrate contacts are provided by N116 and T166. K168 acts as the Proton acceptor in catalysis. Position 170 (K170) interacts with substrate. K194, D196, and E197 together coordinate Mg(2+). N6-carboxylysine is present on K194. The active-site Proton acceptor is the H287. Substrate is bound by residues R288, H320, and S372.

Belongs to the RuBisCO large chain family. Type I subfamily. As to quaternary structure, heterohexadecamer of 8 large chains and 8 small chains. The cofactor is Mg(2+).

It catalyses the reaction 2 (2R)-3-phosphoglycerate + 2 H(+) = D-ribulose 1,5-bisphosphate + CO2 + H2O. The catalysed reaction is D-ribulose 1,5-bisphosphate + O2 = 2-phosphoglycolate + (2R)-3-phosphoglycerate + 2 H(+). Functionally, ruBisCO catalyzes two reactions: the carboxylation of D-ribulose 1,5-bisphosphate, the primary event in carbon dioxide fixation, as well as the oxidative fragmentation of the pentose substrate. Both reactions occur simultaneously and in competition at the same active site. In Nitrosomonas eutropha (strain DSM 101675 / C91 / Nm57), this protein is Ribulose bisphosphate carboxylase large chain.